A 258-amino-acid chain; its full sequence is Phosphate import ATP-binding protein PstB 3 (258 aa).

Positions 10–253 (MTARSLAVHY…PANSLTQGYI (244 aa)) constitute an ABC transporter domain. 42 to 49 (GPSGCGKS) serves as a coordination point for ATP.

This sequence belongs to the ABC transporter superfamily. Phosphate importer (TC 3.A.1.7) family. In terms of assembly, the complex is composed of two ATP-binding proteins (PstB), two transmembrane proteins (PstC and PstA) and a solute-binding protein (PstS).

The protein resides in the cell inner membrane. The catalysed reaction is phosphate(out) + ATP + H2O = ADP + 2 phosphate(in) + H(+). In terms of biological role, part of the ABC transporter complex PstSACB involved in phosphate import. Responsible for energy coupling to the transport system. This is Phosphate import ATP-binding protein PstB 3 from Paramagnetospirillum magneticum (strain ATCC 700264 / AMB-1) (Magnetospirillum magneticum).